The chain runs to 943 residues: Translation initiation factor IF-2 (943 aa).

The disordered stretch occupies residues 35–359; it reads MSSIDQDQEA…MPQRKERPLP (325 aa). The span at 57–76 shows a compositional bias: low complexity; sequence KAPSSQAAKTPAKAAKTSSA. Composition is skewed to basic and acidic residues over residues 92 to 103 and 110 to 124; these read SNDHADAAEHSQ and AKQE…KTSD. Residues 130–141 show a composition bias toward polar residues; sequence SKSTILRPRSTQ. Low complexity predominate over residues 142–190; sequence TAHTNTNHNRGGNTASANNTANGRNSNRSNNNNNNRSANNANRSGNNNR. 3 stretches are compositionally biased toward basic and acidic residues: residues 191–205, 239–250, and 259–271; these read SNER…RFDN, ASERQQPKRQEA, and KRSE…RPRT. 2 stretches are compositionally biased toward low complexity: residues 289 to 299 and 315 to 330; these read PAAAAPKPASA and NFGR…GFNR. Residues 331-342 are compositionally biased toward basic residues; it reads NNRRNKKNKRRQ. Basic and acidic residues predominate over residues 346–358; that stretch reads PKKEMPQRKERPL. Residues 444-613 enclose the tr-type G domain; that stretch reads PRPPVVTIMG…LLEADVLELK (170 aa). Residues 453–460 form a G1 region; it reads GHVDHGKT. Position 453–460 (453–460) interacts with GTP; it reads GHVDHGKT. The interval 478–482 is G2; that stretch reads GITQH. The interval 499-502 is G3; the sequence is DTPG. GTP contacts are provided by residues 499 to 503 and 553 to 556; these read DTPGH and NKID. The tract at residues 553 to 556 is G4; sequence NKID. Residues 589–591 are G5; that stretch reads SAK.

Belongs to the TRAFAC class translation factor GTPase superfamily. Classic translation factor GTPase family. IF-2 subfamily.

It localises to the cytoplasm. One of the essential components for the initiation of protein synthesis. Protects formylmethionyl-tRNA from spontaneous hydrolysis and promotes its binding to the 30S ribosomal subunits. Also involved in the hydrolysis of GTP during the formation of the 70S ribosomal complex. This chain is Translation initiation factor IF-2, found in Lacticaseibacillus paracasei (strain ATCC 334 / BCRC 17002 / CCUG 31169 / CIP 107868 / KCTC 3260 / NRRL B-441) (Lactobacillus paracasei).